The sequence spans 439 residues: Damage-control phosphatase ARMT1 (439 aa).

A2 is subject to N-acetylalanine. Phosphoserine is present on S4. K40 carries the N6-acetyllysine modification. Positions 251 and 252 each coordinate Mn(2+). A substrate-binding site is contributed by 251–252 (DN). E256 and D289 together coordinate S-adenosyl-L-methionine. D289 contacts Mn(2+). Substrate is bound by residues 365 to 369 (DLNYR) and K402. The short motif at 399-402 (RTLK) is the Subfamily III RTxK motif element.

The protein belongs to the damage-control phosphatase family. Sugar phosphate phosphatase III subfamily. Requires Mn(2+) as cofactor. The cofactor is Ni(2+). Post-translationally, automethylated.

It catalyses the reaction beta-D-fructose 1-phosphate + H2O = D-fructose + phosphate. The enzyme catalyses beta-D-fructose 6-phosphate = dihydroxyacetone + D-glyceraldehyde 3-phosphate. The catalysed reaction is L-glutamyl-[protein] + S-adenosyl-L-methionine = [protein]-L-glutamate 5-O-methyl ester + S-adenosyl-L-homocysteine. Metal-dependent phosphatase that shows phosphatase activity against several substrates, including fructose-1-phosphate and fructose-6-phosphate. Its preference for fructose-1-phosphate, a strong glycating agent that causes DNA damage rather than a canonical yeast metabolite, suggests a damage-control function in hexose phosphate metabolism. Has also been shown to have O-methyltransferase activity that methylates glutamate residues of target proteins to form gamma-glutamyl methyl ester residues. Possibly methylates PCNA, suggesting it is involved in the DNA damage response. This is Damage-control phosphatase ARMT1 from Mus musculus (Mouse).